The following is a 639-amino-acid chain: tRNA uridine 5-carboxymethylaminomethyl modification enzyme MnmG (639 aa).

Residues G13–G18, V125, and S180 each bind FAD. Residue G273–F287 coordinates NAD(+). Q370 serves as a coordination point for FAD. The segment at K620–A639 is disordered.

The protein belongs to the MnmG family. In terms of assembly, homodimer. Heterotetramer of two MnmE and two MnmG subunits. The cofactor is FAD.

Its subcellular location is the cytoplasm. Functionally, NAD-binding protein involved in the addition of a carboxymethylaminomethyl (cmnm) group at the wobble position (U34) of certain tRNAs, forming tRNA-cmnm(5)s(2)U34. The chain is tRNA uridine 5-carboxymethylaminomethyl modification enzyme MnmG from Thioalkalivibrio sulfidiphilus (strain HL-EbGR7).